The primary structure comprises 912 residues: Multiple C2 and transmembrane domain-containing protein (912 aa).

Low complexity predominate over residues 1–33 (MSRIQYVDQVDQVELDQQQQPGSSSTVSGSTPP). Disordered stretches follow at residues 1-80 (MSRI…KRAK) and 145-165 (SSEGSSVTHSPRHRSTTIGGS). Residues 38–49 (PHGSPSLQQSQR) are compositionally biased toward polar residues. 3 C2 domains span residues 218–337 (QANE…HLQL), 371–493 (RNSK…HLML), and 522–637 (ERYK…TLKD). Residues aspartate 252, aspartate 258, aspartate 305, aspartate 307, and aspartate 313 each coordinate Ca(2+). 4 residues coordinate Ca(2+): aspartate 553, aspartate 559, aspartate 605, and aspartate 607. The next 2 membrane-spanning stretches (helical) occupy residues 729–749 (IVACVYGDLETVPLVLLLIIL) and 826–846 (LTWLAVVLLLGAILVLHFVPL). The tract at residues 887 to 912 (NQYRELPPSAPTDQTRNNPKKKLKGS) is disordered.

The cofactor is Ca(2+). Motor neurons (at protein level).

It is found in the endoplasmic reticulum membrane. Its function is as follows. Calcium sensor which is essential for the stabilization of normal baseline neurotransmitter release and for the induction and long-term maintenance of presynaptic homeostatic plasticity. The protein is Multiple C2 and transmembrane domain-containing protein of Drosophila melanogaster (Fruit fly).